A 395-amino-acid chain; its full sequence is Phosphopentomutase (395 aa).

Asp12, Asp289, His294, Asp330, His331, and His342 together coordinate Mn(2+).

It belongs to the phosphopentomutase family. Mn(2+) serves as cofactor.

The protein resides in the cytoplasm. It carries out the reaction 2-deoxy-alpha-D-ribose 1-phosphate = 2-deoxy-D-ribose 5-phosphate. It catalyses the reaction alpha-D-ribose 1-phosphate = D-ribose 5-phosphate. It participates in carbohydrate degradation; 2-deoxy-D-ribose 1-phosphate degradation; D-glyceraldehyde 3-phosphate and acetaldehyde from 2-deoxy-alpha-D-ribose 1-phosphate: step 1/2. Its function is as follows. Isomerase that catalyzes the conversion of deoxy-ribose 1-phosphate (dRib-1-P) and ribose 1-phosphate (Rib-1-P) to deoxy-ribose 5-phosphate (dRib-5-P) and ribose 5-phosphate (Rib-5-P), respectively. This Levilactobacillus brevis (strain ATCC 367 / BCRC 12310 / CIP 105137 / JCM 1170 / LMG 11437 / NCIMB 947 / NCTC 947) (Lactobacillus brevis) protein is Phosphopentomutase.